The primary structure comprises 476 residues: MVQGTTSDAGKTTLVAALCRLLAQEGVRVVPFKPQNMALNSAVTADGGEIGRAQALQAVAAGLQPHTDMNPILLKPSSDTGAQVIIHGKARSDMNARDYHAYKPIAMQAVLESYQRLQTQYESVLVEGAGSPAEVNLRERDIANMGFAEAVDCPVILVADIDRGGVFAHIIGTLACLSESERRRTVGFVINRFRGDISLLEPGLKWLEEQTGKPVLAVLPYLHGLFLDAEDAVEHTQAVRGAFRVVVPVPPRISNHTDFDALRAHPEIDLQLVGPGQPIPAADLIILPGSKNTRGDLEWLIANGWREALLRHLRYGGKIIGICGGYQMLGMTVADPHGVEGTPGESAGLGLLDVATELTRDKRLEQVSGVCAFADVGVSGYEIHMGTSDGAARAQPAFLIDGRPEGARSADDQVLGTYLHGLFDTPDACAALLHWAGLNSDVRVDTAQLREASLQRLAAAARPLLAALRALPDYSR.

The GATase cobBQ-type domain occupies 242 to 428 (AFRVVVPVPP…LHGLFDTPDA (187 aa)). The Nucleophile role is filled by cysteine 323. Residue histidine 420 is part of the active site.

It belongs to the CobB/CobQ family. CobQ subfamily.

It participates in cofactor biosynthesis; adenosylcobalamin biosynthesis. Functionally, catalyzes amidations at positions B, D, E, and G on adenosylcobyrinic A,C-diamide. NH(2) groups are provided by glutamine, and one molecule of ATP is hydrogenolyzed for each amidation. The chain is Cobyric acid synthase from Janthinobacterium sp. (strain Marseille) (Minibacterium massiliensis).